The sequence spans 102 residues: Small ribosomal subunit protein uS10 (102 aa).

The protein belongs to the universal ribosomal protein uS10 family. As to quaternary structure, part of the 30S ribosomal subunit.

In terms of biological role, involved in the binding of tRNA to the ribosomes. This Roseiflexus castenholzii (strain DSM 13941 / HLO8) protein is Small ribosomal subunit protein uS10.